The following is a 579-amino-acid chain: MSALRPLLLLLLHLCPGLGPGHGSEAKVVRSCAETRQVLGARGYSLNLIPPSLISGEHLQVCPQEYTCCSSETEQKLIRDAEVTFRGLVEDSGSFLIHTLAARHRKFNEFFREMLSISQHSLAQLFSHSYGRLYSQHAVIFNSLFSGLRDYYEKSGEGLDDTLADFWAQLLERAFPLLHPQYSFPPDFLLCLTRLTSTADGSLQPFGDSPRRLRLQISRALVAARALVQGLETGRNVVSEALKVPVLEGCRQALMRLIGCPLCRGVPSLMPCRGFCLNVAHGCLSSRGLEPEWGGYLDGLLLLAEKLQGPFSFELAAESIGVKISEGLMHLQENSVKVSAKVFQECGTPHPVQSRSRRAPAPREEASRSWRASAEEERPTTAAGTNLHRLVWELRERLSRVRGFWAGLPVTVCGDSRMAADLSQETAPCWTGVGRGRYMSPVVVGSLNEQLHNPELDTSSPDVPTRRRRLHLRAATARMKAAALGQDLDMHDADEDASGSGGGQQYADDWKAGAVPVVPPARPPRPPRPPRRDGLGVRGGSGSARYNQGRSRNLGSSVGLHTPLVLLLLPSALTLLVLR.

The signal sequence occupies residues 1-21 (MSALRPLLLLLLHLCPGLGPG). Serine 55, serine 92, and serine 155 each carry an O-linked (Xyl...) (heparan sulfate) serine glycan. Disordered stretches follow at residues 347-382 (GTPH…PTTA) and 483-552 (ALGQ…GRSR). Positions 361 to 379 (APREEASRSWRASAEEERP) are enriched in basic and acidic residues. 2 O-linked (Xyl...) (heparan sulfate) serine glycosylation sites follow: serine 498 and serine 500. The span at 517–527 (VVPPARPPRPP) shows a compositional bias: pro residues. A lipid anchor (GPI-anchor amidated serine) is attached at serine 556. Positions 557-579 (SVGLHTPLVLLLLPSALTLLVLR) are cleaved as a propeptide — removed in mature form.

It belongs to the glypican family. Interacts (via heparan sulfate) with PTN; this interaction promotes neurite outgrowth through binding of PTN with chondroitin sulfate of proteoglycans, thereby releasing PTPRS of chondroitin sulfate proteoglycans (CSPGs) and leading to binding with heparan sulfate of GPC2. Interacts (heparan sulfate chain) with MDK; this interaction is inhibited by heparin followed by chondroitin sulfate E; this interaction induces GPC2 clustering through heparan sulfate chain; this interaction induces neuronal cell adhesion and neurite outgrowth.

Its subcellular location is the cell membrane. It is found in the secreted. It localises to the extracellular space. In terms of biological role, cell surface proteoglycan that bears heparan sulfate. May fulfill a function related to the motile behaviors of developing neurons. The sequence is that of Glypican-2 (Gpc2) from Mus musculus (Mouse).